The following is a 626-amino-acid chain: Glucoamylase (626 aa).

An N-terminal signal peptide occupies residues 1 to 19 (MHLVSSLLVVGAAFQAVLG). The propeptide occupies 20-35 (LPDPLHEKRHSDIIKR). N-linked (GlcNAc...) asparagine glycosylation occurs at Asn106. Residue Trp155 participates in substrate binding. The N-linked (GlcNAc...) asparagine glycan is linked to Asn206. Asp211 acts as the Proton acceptor in catalysis. Glu214 serves as the catalytic Proton donor. N-linked (GlcNAc...) asparagine glycosylation is present at Asn217. The region spanning 520–626 (CAADHEVLVT…STATLDDTWR (107 aa)) is the CBM20 domain.

This sequence belongs to the glycosyl hydrolase 15 family.

It carries out the reaction Hydrolysis of terminal (1-&gt;4)-linked alpha-D-glucose residues successively from non-reducing ends of the chains with release of beta-D-glucose.. This chain is Glucoamylase (gla-1), found in Neurospora crassa (strain ATCC 24698 / 74-OR23-1A / CBS 708.71 / DSM 1257 / FGSC 987).